A 589-amino-acid chain; its full sequence is Netrin-G2 (589 aa).

The first 17 residues, 1 to 17 (MLRLLALFLHCLPLVSG), serve as a signal peptide directing secretion. Intrachain disulfides connect cysteine 22–cysteine 39, cysteine 61–cysteine 81, and cysteine 69–cysteine 77. Residues 35 to 286 (EFYACQPKVM…AISNIEVIGR (252 aa)) form the Laminin N-terminal domain. The tract at residues 69 to 88 (CSHENPYLCSNECDASNPDL) is NGL discriminant loop I. N-linked (GlcNAc...) asparagine glycosylation is found at asparagine 122 and asparagine 128. Cysteine 171 and cysteine 195 are joined by a disulfide. Positions 201–203 (RWA) are NGL discriminant loop II. Residues 264–267 (TYVQ) are NGL discriminant loop III. Intrachain disulfides connect cysteine 287–cysteine 296, cysteine 289–cysteine 305, cysteine 307–cysteine 316, cysteine 319–cysteine 344, cysteine 413–cysteine 422, cysteine 415–cysteine 433, cysteine 436–cysteine 445, cysteine 448–cysteine 466, cysteine 469–cysteine 481, cysteine 471–cysteine 487, cysteine 489–cysteine 498, cysteine 501–cysteine 511, cysteine 516–cysteine 529, cysteine 523–cysteine 535, and cysteine 537–cysteine 546. 3 Laminin EGF-like domains span residues 287–346 (CKCN…ACAA), 413–468 (CECY…VCIE), and 469–513 (CNCN…GCYP). Asparagine 310 carries N-linked (GlcNAc...) asparagine glycosylation. N-linked (GlcNAc...) asparagine glycosylation is present at asparagine 455. Asparagine 482 carries an N-linked (GlcNAc...) asparagine glycan. A lipid anchor (GPI-anchor amidated glycine) is attached at glycine 566. Residues 567 to 589 (IVPRPDTLLGCLLLLGLAARLAC) constitute a propeptide, removed in mature form.

As to quaternary structure, interacts with LRRC4. N-glycosylated. In terms of tissue distribution, expression is restricted primarily to neurons of the CNS, particularly in the cerebral cortex, habenular nucleus and superior colliculus. Low levels in lung, kidney, heart and spleen.

Its subcellular location is the cell membrane. In terms of biological role, involved in controlling patterning and neuronal circuit formation at the laminar, cellular, subcellular and synaptic levels. Promotes neurite outgrowth of both axons and dendrites. In Mus musculus (Mouse), this protein is Netrin-G2 (Ntng2).